A 100-amino-acid chain; its full sequence is Tuberoinfundibular peptide of 39 residues (100 aa).

Residues 1-30 (METRQVSRSPRVRLLLLLLLLLVVPWGVRT) form the signal peptide. Residues 31–59 (ASGVALPPVGVLSLRPPGRAWADPATPRP) constitute a propeptide that is removed on maturation.

The protein belongs to the parathyroid hormone family. In terms of assembly, ligand of high affinity for the PTH2 receptor (PTH2R).

The protein resides in the secreted. Its function is as follows. Plays a role as a potent and selective agonist of PTH2R resulting in adenyl cyclase activation and intracellular calcium levels elevation. Induces protein kinase C beta activation, recruitment of beta-arrestin and PTH2R internalization. May inhibit cell proliferation via its action of PTH2R activation. Neuropeptide which may also have a role in spermatogenesis. May activate nociceptors and nociceptive circuits. This chain is Tuberoinfundibular peptide of 39 residues (PTH2), found in Bos taurus (Bovine).